The chain runs to 274 residues: Undecaprenyl-diphosphatase (274 aa).

Helical transmembrane passes span 21 to 39 (FLPI…LLGF), 44 to 64 (AQVF…LVYW), 85 to 105 (FNLA…GKAI), 109 to 129 (LFTP…ILWA), 185 to 205 (ATDF…VYSL), 214 to 234 (VADL…AWLC), and 247 to 267 (FVPF…TAST).

Belongs to the UppP family.

The protein localises to the cell inner membrane. It catalyses the reaction di-trans,octa-cis-undecaprenyl diphosphate + H2O = di-trans,octa-cis-undecaprenyl phosphate + phosphate + H(+). Catalyzes the dephosphorylation of undecaprenyl diphosphate (UPP). Confers resistance to bacitracin. In Verminephrobacter eiseniae (strain EF01-2), this protein is Undecaprenyl-diphosphatase.